We begin with the raw amino-acid sequence, 832 residues long: Protein P (832 aa).

The tract at residues M1–Q177 is terminal protein domain (TP). The tract at residues D178–L335 is spacer. Disordered regions lie at residues I186–Q218 and T239–Y266. A polymerase/reverse transcriptase domain (RT) region spans residues E336–Q679. Residues E346–I589 enclose the Reverse transcriptase domain. Residues D418, D540, and D541 each coordinate Mg(2+).

The protein belongs to the hepadnaviridae P protein family.

The catalysed reaction is DNA(n) + a 2'-deoxyribonucleoside 5'-triphosphate = DNA(n+1) + diphosphate. It catalyses the reaction Endonucleolytic cleavage to 5'-phosphomonoester.. With respect to regulation, activated by host HSP70 and HSP40 in vitro to be able to bind the epsilon loop of the pgRNA. Because deletion of the RNase H region renders the protein partly chaperone-independent, the chaperones may be needed indirectly to relieve occlusion of the RNA-binding site by this domain. Inhibited by several reverse-transcriptase inhibitors: Lamivudine, Adefovir and Entecavir. Functionally, multifunctional enzyme that converts the viral RNA genome into dsDNA in viral cytoplasmic capsids. This enzyme displays a DNA polymerase activity that can copy either DNA or RNA templates, and a ribonuclease H (RNase H) activity that cleaves the RNA strand of RNA-DNA heteroduplexes in a partially processive 3'- to 5'-endonucleasic mode. Neo-synthesized pregenomic RNA (pgRNA) are encapsidated together with the P protein, and reverse-transcribed inside the nucleocapsid. Initiation of reverse-transcription occurs first by binding the epsilon loop on the pgRNA genome, and is initiated by protein priming, thereby the 5'-end of (-)DNA is covalently linked to P protein. Partial (+)DNA is synthesized from the (-)DNA template and generates the relaxed circular DNA (RC-DNA) genome. After budding and infection, the RC-DNA migrates in the nucleus, and is converted into a plasmid-like covalently closed circular DNA (cccDNA). The activity of P protein does not seem to be necessary for cccDNA generation, and is presumably released from (+)DNA by host nuclear DNA repair machinery. This Homo sapiens (Human) protein is Protein P.